We begin with the raw amino-acid sequence, 436 residues long: AMSH-like protease (436 aa).

An N-acetylmethionine modification is found at Met1. Phosphoserine occurs at positions 25 and 242. One can recognise an MPN domain in the interval 269 to 397; the sequence is VVLPEDLCHK…IFRLTNAGML (129 aa). Zn(2+)-binding residues include His347, His349, Asp360, His362, Cys402, His408, and His410. The JAMM motif motif lies at 347-360; it reads HTHPTQTAFLSSVD.

It belongs to the peptidase M67C family. Requires Zn(2+) as cofactor. As to expression, ubiquitously expressed.

Its activity is regulated as follows. Inhibited by UbV(SP.1), an ubiquitin variant that also inhibits STAMBP. Functionally, zinc metalloprotease that specifically cleaves 'Lys-63'-linked polyubiquitin chains. Acts as a positive regulator of the TORC1 signaling pathway by mediating 'Lys-63'-linked deubiquitination of SESN2, thereby inhibiting SESN2-interaction with the GATOR2 complex. Does not cleave 'Lys-48'-linked polyubiquitin chains. The sequence is that of AMSH-like protease from Homo sapiens (Human).